Consider the following 142-residue polypeptide: Large ribosomal subunit protein uL23 (142 aa).

Lys61 is covalently cross-linked (Glycyl lysine isopeptide (Lys-Gly) (interchain with G-Cter in SUMO)).

The protein belongs to the universal ribosomal protein uL23 family. Component of the large ribosomal subunit (LSU). Mature yeast ribosomes consist of a small (40S) and a large (60S) subunit. The 40S small subunit contains 1 molecule of ribosomal RNA (18S rRNA) and 33 different proteins (encoded by 57 genes). The large 60S subunit contains 3 rRNA molecules (25S, 5.8S and 5S rRNA) and 46 different proteins (encoded by 81 genes). uL23 is associated with the polypeptide exit tunnel.

It is found in the cytoplasm. Functionally, component of the ribosome, a large ribonucleoprotein complex responsible for the synthesis of proteins in the cell. The small ribosomal subunit (SSU) binds messenger RNAs (mRNAs) and translates the encoded message by selecting cognate aminoacyl-transfer RNA (tRNA) molecules. The large subunit (LSU) contains the ribosomal catalytic site termed the peptidyl transferase center (PTC), which catalyzes the formation of peptide bonds, thereby polymerizing the amino acids delivered by tRNAs into a polypeptide chain. The nascent polypeptides leave the ribosome through a tunnel in the LSU and interact with protein factors that function in enzymatic processing, targeting, and the membrane insertion of nascent chains at the exit of the ribosomal tunnel. uL23 is a major component of the universal docking site for these factors at the polypeptide exit tunnel. The chain is Large ribosomal subunit protein uL23 from Saccharomyces cerevisiae (strain ATCC 204508 / S288c) (Baker's yeast).